Reading from the N-terminus, the 87-residue chain is Small ribosomal subunit protein bS20 (87 aa).

It belongs to the bacterial ribosomal protein bS20 family.

Its function is as follows. Binds directly to 16S ribosomal RNA. The chain is Small ribosomal subunit protein bS20 from Shigella flexneri.